A 131-amino-acid chain; its full sequence is D-ribose pyranase (131 aa).

His20 (proton donor) is an active-site residue. Residues Asp28, His98, and 120-122 (YAN) each bind substrate.

It belongs to the RbsD / FucU family. RbsD subfamily. In terms of assembly, homodecamer.

The protein resides in the cytoplasm. The catalysed reaction is beta-D-ribopyranose = beta-D-ribofuranose. It participates in carbohydrate metabolism; D-ribose degradation; D-ribose 5-phosphate from beta-D-ribopyranose: step 1/2. Its function is as follows. Catalyzes the interconversion of beta-pyran and beta-furan forms of D-ribose. The protein is D-ribose pyranase of Clostridium tetani (strain Massachusetts / E88).